Reading from the N-terminus, the 31-residue chain is Cycloviolacin-O25 (31 aa).

The cyclopeptide (Asp-Asn) cross-link spans Asp1 to Asn31. 3 disulfide bridges follow: Cys4–Cys21, Cys8–Cys23, and Cys13–Cys28.

Post-translationally, this is a cyclic peptide. As to expression, expressed in roots and runners but not in leaves, petals and petioles (at protein level).

Functionally, probably participates in a plant defense mechanism. This Viola odorata (Sweet violet) protein is Cycloviolacin-O25.